The following is an 81-amino-acid chain: Conotoxin ViKr92 (81 aa).

A signal peptide spans 1–22 (MKLTWMMIVAVLFLTAWTFVTA). Positions 23 to 51 (DDTRYKLENPFLKARNELQKLEASQLNER) are excised as a propeptide. Cystine bridges form between Cys53/Cys70, Cys60/Cys74, and Cys69/Cys78.

Belongs to the conotoxin O1 superfamily. As to expression, expressed by the venom duct.

It localises to the secreted. The protein is Conotoxin ViKr92 of Conus virgo (Virgin cone).